The following is a 549-amino-acid chain: DNA 3'-5' helicase XPB (549 aa).

Positions 1–130 are required for protein stability or solubility; sequence MTDGPLIVQS…RNKKIAPMLG (130 aa). Residues 190 to 344 enclose the Helicase ATP-binding domain; it reads ADSFWAGGSG…DVFSLIGPKR (155 aa). 203-210 serves as a coordination point for ATP; the sequence is LPCGAGKT. The DEAH box signature appears at 298 to 301; that stretch reads DEVH. One can recognise a Helicase C-terminal domain in the interval 399-545; sequence VVKSILAKHP…YIIRDADDLL (147 aa).

This sequence belongs to the helicase family. RAD25/XPB subfamily. In terms of assembly, monomer. Requires Mn(2+) as cofactor. The cofactor is Mg(2+).

The enzyme catalyses Couples ATP hydrolysis with the unwinding of duplex DNA by translocating in the 3'-5' direction.. It carries out the reaction ATP + H2O = ADP + phosphate + H(+). Functionally, ATP-dependent 3'-5' DNA helicase, unwinds 3'-overhangs, 3'- flaps, and splayed-arm DNA substrates but not 5'-overhangs, 5'-flap substrates, 3-way junctions or Holliday junctions. Not highly efficient in vitro. Requires ATP hydrolysis for helicase activity; the ATPase activity is DNA-dependent and requires a minimum of 4 single-stranded nucleotides (nt) with 6-10 nt providing all necessary interactions for full processive unwinding. The ATPase prefers ATP over CTP or GTP, is almost inactive with TTP. DNA helicase activity requires ATP or dATP and only acts when the 3'-overhang is &gt;20 nt. Capable of unwinding a DNA:RNA hybrid if the 3'-overhang is DNA. Also catalyzes ATP-independent annealing of complementary DNA strands; annealing requires Mg(2+). The chain is DNA 3'-5' helicase XPB from Mycobacterium tuberculosis (strain ATCC 25618 / H37Rv).